We begin with the raw amino-acid sequence, 211 residues long: Beta-crystallin B3 (211 aa).

M1 carries the N-acetylmethionine modification. At A2 the chain carries N-acetylalanine; in Beta-crystallin B3, N-terminally processed. An N-terminal arm region spans residues 2–23 (AEQHGAPEQAAAGKSHGDLGGS). 2 Beta/gamma crystallin 'Greek key' domains span residues 24–63 (YKVI…QVES) and 64–108 (GPWL…RPLN). Positions 109–113 (IDSPH) are connecting peptide. 2 consecutive Beta/gamma crystallin 'Greek key' domains span residues 114–155 (HKLH…RAIN) and 156–198 (GTWV…RRIR). The interval 200–211 (QKWHKRGRFPSS) is C-terminal arm.

This sequence belongs to the beta/gamma-crystallin family. Homo/heterodimer, or complexes of higher-order. The structure of beta-crystallin oligomers seems to be stabilized through interactions between the N-terminal arms.

Functionally, crystallins are the dominant structural components of the vertebrate eye lens. This chain is Beta-crystallin B3 (CRYBB3), found in Homo sapiens (Human).